The chain runs to 370 residues: Glucan endo-1,3-beta-glucosidase (370 aa).

An N-terminal signal peptide occupies residues M1 to A32. Q33 carries the post-translational modification Pyrrolidone carboxylic acid. Catalysis depends on E127, which acts as the Proton donor. E272 functions as the Nucleophile in the catalytic mechanism. Positions G348–M370 are cleaved as a propeptide — removed in mature form. N361 is a glycosylation site (N-linked (GlcNAc...) asparagine).

The protein belongs to the glycosyl hydrolase 17 family. Constitutively expressed in seedling roots.

The catalysed reaction is Hydrolysis of (1-&gt;3)-beta-D-glucosidic linkages in (1-&gt;3)-beta-D-glucans.. Functionally, implicated in the defense of plants against pathogens. This is Glucan endo-1,3-beta-glucosidase from Pisum sativum (Garden pea).